A 100-amino-acid chain; its full sequence is Putative pterin-4-alpha-carbinolamine dehydratase (100 aa).

Belongs to the pterin-4-alpha-carbinolamine dehydratase family.

The catalysed reaction is (4aS,6R)-4a-hydroxy-L-erythro-5,6,7,8-tetrahydrobiopterin = (6R)-L-erythro-6,7-dihydrobiopterin + H2O. The chain is Putative pterin-4-alpha-carbinolamine dehydratase from Rhodopseudomonas palustris (strain ATCC BAA-98 / CGA009).